Here is a 208-residue protein sequence, read N- to C-terminus: Calaxin (208 aa).

EF-hand domains are found at residues Thr64–Gly99, Thr100–Lys135, and Gly145–Leu180. Residues Asp77, Asp79, Asp81, Asp113, Asn115, Asp117, Tyr119, Glu124, Asp158, Asp160, Asp162, Lys164, and Asp169 each coordinate Ca(2+).

Component of the outer dynein arm-docking complex along with ODAD1, ODAD2, ODAD3 and ODAD4.

It localises to the cytoplasm. The protein localises to the cytoskeleton. Its subcellular location is the cilium axoneme. The protein resides in the cell projection. It is found in the cilium. It localises to the flagellum. Functionally, component of the outer dynein arm-docking complex (ODA-DC) that mediates outer dynein arms (ODA) binding onto the doublet microtubule. Seems to regulate the assembly of both ODAs and their axonemal docking complex onto ciliary microtubules. Regulates ciliary and flagellar motility and is required for cilia-driven determination of body laterality. In Xenopus laevis (African clawed frog), this protein is Calaxin (clxn).